A 183-amino-acid polypeptide reads, in one-letter code: Adenine phosphoribosyltransferase (183 aa).

The protein belongs to the purine/pyrimidine phosphoribosyltransferase family. In terms of assembly, homodimer.

It is found in the cytoplasm. It catalyses the reaction AMP + diphosphate = 5-phospho-alpha-D-ribose 1-diphosphate + adenine. It participates in purine metabolism; AMP biosynthesis via salvage pathway; AMP from adenine: step 1/1. Its function is as follows. Catalyzes a salvage reaction resulting in the formation of AMP, that is energically less costly than de novo synthesis. This chain is Adenine phosphoribosyltransferase, found in Salmonella gallinarum (strain 287/91 / NCTC 13346).